A 1444-amino-acid chain; its full sequence is DNA polymerase III PolC-type (1444 aa).

The tract at residues 196 to 218 (EAVQVMQKRQAEGQNGNSSAAPL) is disordered. Residues 207 to 216 (EGQNGNSSAA) show a composition bias toward polar residues. An Exonuclease domain is found at 428–584 (YCVFDVETTG…FDAEATAYLA (157 aa)).

The protein belongs to the DNA polymerase type-C family. PolC subfamily.

Its subcellular location is the cytoplasm. The catalysed reaction is DNA(n) + a 2'-deoxyribonucleoside 5'-triphosphate = DNA(n+1) + diphosphate. In terms of biological role, required for replicative DNA synthesis. This DNA polymerase also exhibits 3' to 5' exonuclease activity. In Listeria welshimeri serovar 6b (strain ATCC 35897 / DSM 20650 / CCUG 15529 / CIP 8149 / NCTC 11857 / SLCC 5334 / V8), this protein is DNA polymerase III PolC-type.